The primary structure comprises 132 residues: MRHGHGLRKLNRTSEHRLAMLRNMMNSLLQHEVIKTTLPKAKELRRVVEPMITLAKEPTVANKRLAFDRLRDRDMVVKLFAELGPRYKARPGGYTRILKMGFRVGDNAPMALVELVDRPEIEDTTADAAKAE.

Belongs to the bacterial ribosomal protein bL17 family. Part of the 50S ribosomal subunit. Contacts protein L32.

The chain is Large ribosomal subunit protein bL17 from Polaromonas sp. (strain JS666 / ATCC BAA-500).